The sequence spans 318 residues: Protein-methionine-sulfoxide reductase catalytic subunit MsrP (318 aa).

A signal peptide (tat-type signal) is located at residues 1–40 (MKQLMMSDVTPEEIFNQRRQIIKSMGLGIATLGLPNIAFA). Residues asparagine 72, 75 to 76 (YE), cysteine 130, threonine 165, asparagine 217, arginine 222, and 233 to 235 (SIK) contribute to the Mo-molybdopterin site.

The protein belongs to the MsrP family. Heterodimer of a catalytic subunit (MsrP) and a heme-binding subunit (MsrQ). Requires Mo-molybdopterin as cofactor. In terms of processing, predicted to be exported by the Tat system. The position of the signal peptide cleavage has not been experimentally proven.

The protein resides in the periplasm. The enzyme catalyses L-methionyl-[protein] + a quinone + H2O = L-methionyl-(S)-S-oxide-[protein] + a quinol. It carries out the reaction L-methionyl-[protein] + a quinone + H2O = L-methionyl-(R)-S-oxide-[protein] + a quinol. Part of the MsrPQ system that repairs oxidized periplasmic proteins containing methionine sulfoxide residues (Met-O), using respiratory chain electrons. Thus protects these proteins from oxidative-stress damage caused by reactive species of oxygen and chlorine generated by the host defense mechanisms. MsrPQ is essential for the maintenance of envelope integrity under bleach stress, rescuing a wide series of structurally unrelated periplasmic proteins from methionine oxidation. The catalytic subunit MsrP is non-stereospecific, being able to reduce both (R-) and (S-) diastereoisomers of methionine sulfoxide. The chain is Protein-methionine-sulfoxide reductase catalytic subunit MsrP from Haemophilus ducreyi (strain 35000HP / ATCC 700724).